The primary structure comprises 186 residues: Protein FAM219A (186 aa).

Disordered stretches follow at residues 1–47 (MMEE…NYKP) and 59–132 (ELAR…GYSS). Positions 67 to 81 (KNGTVGSPVNQQPKK) are enriched in polar residues. The span at 123–132 (SRYSSSGYSS) shows a compositional bias: low complexity.

Belongs to the FAM219 family.

This chain is Protein FAM219A (fam219a), found in Danio rerio (Zebrafish).